Reading from the N-terminus, the 427-residue chain is Gamma-glutamyl phosphate reductase (427 aa).

This sequence belongs to the gamma-glutamyl phosphate reductase family.

It is found in the cytoplasm. It carries out the reaction L-glutamate 5-semialdehyde + phosphate + NADP(+) = L-glutamyl 5-phosphate + NADPH + H(+). Its pathway is amino-acid biosynthesis; L-proline biosynthesis; L-glutamate 5-semialdehyde from L-glutamate: step 2/2. Functionally, catalyzes the NADPH-dependent reduction of L-glutamate 5-phosphate into L-glutamate 5-semialdehyde and phosphate. The product spontaneously undergoes cyclization to form 1-pyrroline-5-carboxylate. The sequence is that of Gamma-glutamyl phosphate reductase from Allorhizobium ampelinum (strain ATCC BAA-846 / DSM 112012 / S4) (Agrobacterium vitis (strain S4)).